The sequence spans 335 residues: Glyceraldehyde-3-phosphate dehydrogenase (335 aa).

NAD(+)-binding positions include 12 to 13 (RI), Asp-36, Arg-80, and Ser-122. Residues 152–154 (SCT), Thr-183, Arg-198, 211–212 (TG), and Arg-234 contribute to the D-glyceraldehyde 3-phosphate site. Cys-153 acts as the Nucleophile in catalysis. An NAD(+)-binding site is contributed by Asn-316.

It belongs to the glyceraldehyde-3-phosphate dehydrogenase family. In terms of assembly, homotetramer.

It is found in the cytoplasm. The enzyme catalyses D-glyceraldehyde 3-phosphate + phosphate + NAD(+) = (2R)-3-phospho-glyceroyl phosphate + NADH + H(+). It functions in the pathway carbohydrate degradation; glycolysis; pyruvate from D-glyceraldehyde 3-phosphate: step 1/5. Its function is as follows. Catalyzes the oxidative phosphorylation of glyceraldehyde 3-phosphate (G3P) to 1,3-bisphosphoglycerate (BPG) using the cofactor NAD. The first reaction step involves the formation of a hemiacetal intermediate between G3P and a cysteine residue, and this hemiacetal intermediate is then oxidized to a thioester, with concomitant reduction of NAD to NADH. The reduced NADH is then exchanged with the second NAD, and the thioester is attacked by a nucleophilic inorganic phosphate to produce BPG. The protein is Glyceraldehyde-3-phosphate dehydrogenase (gap) of Xanthobacter flavus.